Consider the following 101-residue polypeptide: METLAELPSPWFVYLVRCANNALYCGITTDVSRRFAQHQKGRGAKALRGKGPLELVWSLPVADGKSAALKLEYRIKALSKSQKEALVAGMARIDQLEIIFQ.

A GIY-YIG domain is found at 9 to 85; that stretch reads SPWFVYLVRC…KALSKSQKEA (77 aa).

The protein belongs to the UPF0213 family.

The protein is UPF0213 protein VC0395_0675/VC395_A0575 of Vibrio cholerae serotype O1 (strain ATCC 39541 / Classical Ogawa 395 / O395).